The following is a 344-amino-acid chain: Dihydroorotate dehydrogenase (quinone) (344 aa).

Residues 65–69 (AGLDK) and Thr89 each bind FMN. Lys69 contributes to the substrate binding site. Substrate is bound at residue 114–118 (NRMGF). 2 residues coordinate FMN: Asn145 and Asn178. Asn178 provides a ligand contact to substrate. Ser181 acts as the Nucleophile in catalysis. Residue Asn183 coordinates substrate. Residues Lys223 and Thr251 each coordinate FMN. 252 to 253 (NT) contacts substrate. Residues Gly274, Gly303, and 324-325 (YS) each bind FMN.

Belongs to the dihydroorotate dehydrogenase family. Type 2 subfamily. In terms of assembly, monomer. Requires FMN as cofactor.

The protein resides in the cell membrane. It carries out the reaction (S)-dihydroorotate + a quinone = orotate + a quinol. The protein operates within pyrimidine metabolism; UMP biosynthesis via de novo pathway; orotate from (S)-dihydroorotate (quinone route): step 1/1. Functionally, catalyzes the conversion of dihydroorotate to orotate with quinone as electron acceptor. In Cupriavidus necator (strain ATCC 17699 / DSM 428 / KCTC 22496 / NCIMB 10442 / H16 / Stanier 337) (Ralstonia eutropha), this protein is Dihydroorotate dehydrogenase (quinone).